The sequence spans 67 residues: Probable Sec-independent protein translocase protein TatE (67 aa).

The chain crosses the membrane as a helical span at residues 4-21 (ISITKLLVIAALVVLLFG).

This sequence belongs to the TatA/E family. TatE subfamily.

The protein localises to the cell inner membrane. Its function is as follows. Part of the twin-arginine translocation (Tat) system that transports large folded proteins containing a characteristic twin-arginine motif in their signal peptide across membranes. TatE shares overlapping functions with TatA. The sequence is that of Probable Sec-independent protein translocase protein TatE from Citrobacter rodentium (strain ICC168) (Citrobacter freundii biotype 4280).